The chain runs to 474 residues: Lipoprotein lipase (474 aa).

The first 27 residues, 1–27 (MESKALLLVALGVWLQSLTAFRGGVAA), serve as a signal peptide directing secretion. The tract at residues 32–53 (RDFSDIESKFALRTPEDTAEDT) is interaction with GPIHBP1. A disulfide bridge connects residues C54 and C67. N70 is a glycosylation site (N-linked (GlcNAc...) asparagine). Y121 is modified (3'-nitrotyrosine). Catalysis depends on S159, which acts as the Nucleophile. Residue D183 is the Charge relay system of the active site. Residue Y191 is modified to 3'-nitrotyrosine. Positions 194, 197, 199, and 202 each coordinate Ca(2+). Cysteines 243 and 266 form a disulfide. The segment at 243–266 (CNIGEAIRVIAEKGLGDVDQLVKC) is essential for determining substrate specificity. H268 serves as the catalytic Charge relay system. Intrachain disulfides connect C291–C310 and C302–C305. The PLAT domain occupies 341-464 (FHYQVKIHFS…KGKDAAVFVK (124 aa)). A 3'-nitrotyrosine modification is found at Y343. N-linked (GlcNAc...) asparagine glycosylation is present at N386. Positions 417-421 (WSDWW) are important for interaction with lipoprotein particles. An important for heparin binding region spans residues 430–434 (KIRVK). An interaction with GPIHBP1 region spans residues 443 to 467 (IFCAREKVSHLQKGKDAAVFVKCHD). C445 and C465 form a disulfide bridge.

This sequence belongs to the AB hydrolase superfamily. Lipase family. In terms of assembly, homodimer. Interacts with GPIHBP1 with 1:1 stoichiometry. Interacts with APOC2; the interaction activates LPL activity in the presence of lipids. Interaction with heparan sulfate proteoglycans is required to protect LPL against loss of activity. Associates with lipoprotein particles in blood plasma. Interacts with LMF1 and SEL1L; interaction with SEL1L is required to prevent aggregation of newly synthesized LPL in the endoplasmic reticulum (ER), and for normal export of LPL from the ER to the extracellular space. Interacts with SORL1; SORL1 acts as a sorting receptor, promoting LPL localization to endosomes and later to lysosomes, leading to degradation of newly synthesized LPL. Tyrosine nitration after lipopolysaccharide (LPS) challenge down-regulates the lipase activity.

Its subcellular location is the cell membrane. It is found in the secreted. It localises to the extracellular space. The protein localises to the extracellular matrix. It catalyses the reaction a triacylglycerol + H2O = a diacylglycerol + a fatty acid + H(+). It carries out the reaction a 1,2-diacyl-sn-glycero-3-phosphocholine + H2O = a 2-acyl-sn-glycero-3-phosphocholine + a fatty acid + H(+). The catalysed reaction is 1,2,3-tri-(9Z-octadecenoyl)-glycerol + H2O = di-(9Z)-octadecenoylglycerol + (9Z)-octadecenoate + H(+). The enzyme catalyses 1,2-di-(9Z-octadecenoyl)-sn-glycero-3-phosphocholine + H2O = (9Z-octadecenoyl)-sn-glycero-3-phosphocholine + (9Z)-octadecenoate + H(+). It catalyses the reaction 1,2,3-tributanoylglycerol + H2O = dibutanoylglycerol + butanoate + H(+). It carries out the reaction 1,2-dihexadecanoyl-sn-glycero-3-phosphocholine + H2O = hexadecanoyl-sn-glycero-3-phosphocholine + hexadecanoate + H(+). With respect to regulation, the apolipoprotein APOC2 acts as a coactivator of LPL activity. Ca(2+) binding promotes protein stability and formation of the active homodimer. Interaction with GPIHBP1 protects LPL against inactivation by ANGPTL4. Functionally, key enzyme in triglyceride metabolism. Catalyzes the hydrolysis of triglycerides from circulating chylomicrons and very low density lipoproteins (VLDL), and thereby plays an important role in lipid clearance from the blood stream, lipid utilization and storage. Although it has both phospholipase and triglyceride lipase activities it is primarily a triglyceride lipase with low but detectable phospholipase activity. Mediates margination of triglyceride-rich lipoprotein particles in capillaries. Recruited to its site of action on the luminal surface of vascular endothelium by binding to GPIHBP1 and cell surface heparan sulfate proteoglycans. The chain is Lipoprotein lipase (Lpl) from Rattus norvegicus (Rat).